We begin with the raw amino-acid sequence, 339 residues long: MSQLTAEELDSQKCASEGLTSVLTSITMKFNFLFITTVILLSYCFTWLAIRALWKNNIFSNSTRLILIACLLNSVVHQTTMLESRMRQTYRSFVFASEPCNLLYRSSDCVFELHSYYLTGYFSTYSVCSLAFDRLVSHYKSKFYHTHQYFIAVSLLVLQLLLTLVSFYIAYYGVHLAGYVPVCIHYPRLAVHYSTVNTVRTVVMVCCLVVTGFIYYLSVKSEKQIQKSSYSPGKRYTAYENVTTSQSVCILIVLKLFCNMLSSIGINLLLLMGEVVSEGTFVLVALFLPGVTYANLCLPLVIYFKTKLIIRNRKFRIAVMTSMYGDAGEHIDRLKKSWE.

The next 5 membrane-spanning stretches (helical) occupy residues 30-50, 150-170, 199-219, 250-270, and 282-302; these read FNFL…WLAI, FIAV…FYIA, VRTV…YLSV, ILIV…NLLL, and VLVA…PLVI.

It belongs to the nematode receptor-like protein sra family.

The protein resides in the membrane. The chain is Serpentine receptor class alpha-21 (sra-21) from Caenorhabditis elegans.